The following is a 207-amino-acid chain: Imidazoleglycerol-phosphate dehydratase (207 aa).

The protein belongs to the imidazoleglycerol-phosphate dehydratase family.

The protein localises to the cytoplasm. It carries out the reaction D-erythro-1-(imidazol-4-yl)glycerol 3-phosphate = 3-(imidazol-4-yl)-2-oxopropyl phosphate + H2O. Its pathway is amino-acid biosynthesis; L-histidine biosynthesis; L-histidine from 5-phospho-alpha-D-ribose 1-diphosphate: step 6/9. The protein is Imidazoleglycerol-phosphate dehydratase of Mycobacterium avium (strain 104).